The primary structure comprises 404 residues: Activity-regulated cytoskeleton-associated protein (404 aa).

The stretch at 51 to 78 forms a coiled coil; that stretch reads EVSKQVERELKGLQKSVGKLENNLEDHV. A disordered region spans residues 351–404; it reads VQGNMDHSEEPSPQRTPEIQSGDSVESMPPSTTASPVPSNGTQPEPPSPPATVI. A compositionally biased stretch (polar residues) spans 363-393; the sequence is PQRTPEIQSGDSVESMPPSTTASPVPSNGTQ. The span at 394-404 shows a compositional bias: pro residues; sequence PEPPSPPATVI.

Belongs to the ARC/ARG3.1 family. Homooligomer; homooligomerizes into virion-like capsids. Post-translationally, palmitoylation anchors the protein into the membrane by allowing direct insertion into the hydrophobic core of the lipid bilayer. In terms of tissue distribution, expressed at various levels throughout the brain.

It localises to the extracellular vesicle membrane. The protein resides in the postsynaptic cell membrane. It is found in the synapse. Its subcellular location is the postsynaptic density. The protein localises to the early endosome membrane. It localises to the cell projection. The protein resides in the dendrite. It is found in the cytoplasm. Its subcellular location is the cytoskeleton. The protein localises to the cell cortex. It localises to the dendritic spine. In terms of biological role, master regulator of synaptic plasticity that self-assembles into virion-like capsids that encapsulate RNAs and mediate intercellular RNA transfer in the nervous system. ARC protein is released from neurons in extracellular vesicles that mediate the transfer of ARC mRNA into new target cells, where ARC mRNA can undergo activity-dependent translation. ARC capsids are endocytosed and are able to transfer ARC mRNA into the cytoplasm of neurons. Acts as a key regulator of synaptic plasticity: required for protein synthesis-dependent forms of long-term potentiation (LTP) and depression (LTD) and for the formation of long-term memory. Regulates synaptic plasticity by promoting endocytosis of AMPA receptors (AMPARs) in response to synaptic activity: this endocytic pathway maintains levels of surface AMPARs in response to chronic changes in neuronal activity through synaptic scaling, thereby contributing to neuronal homeostasis. Acts as a postsynaptic mediator of activity-dependent synapse elimination in the developing cerebellum by mediating elimination of surplus climbing fiber synapses. Accumulates at weaker synapses, probably to prevent their undesired enhancement. This suggests that ARC-containing virion-like capsids may be required to eliminate synaptic material. This chain is Activity-regulated cytoskeleton-associated protein, found in Gallus gallus (Chicken).